A 387-amino-acid polypeptide reads, in one-letter code: Calcium sensing receptor, chloroplastic (387 aa).

A chloroplast-targeting transit peptide spans Met-1–Ser-33. The Lumenal, thylakoid portion of the chain corresponds to Val-34–Pro-186. Residues Ser-187–Phe-207 traverse the membrane as a helical segment. Residues Ser-208 to Asp-387 are Stromal-facing. Residues Cys-231–Ser-352 enclose the Rhodanese domain. The residue at position 380 (Thr-380) is a Phosphothreonine.

Post-translationally, phosphorylation seems to be light-dependent. In terms of tissue distribution, predominantly expressed in the shoot, including guard cells.

The protein localises to the plastid. Its subcellular location is the chloroplast thylakoid membrane. Its function is as follows. Modulates cytoplasmic Ca(2+) concentration and is crucial for proper stomatal regulation in response to elevated levels of external Ca(2+). May function by regulating concentrations of inositol 1,4,5-trisphosphate (IP3), which in turn triggers release of Ca(2+) from internal stores. May play a role in de-etiolation. The protein is Calcium sensing receptor, chloroplastic (CAS) of Arabidopsis thaliana (Mouse-ear cress).